We begin with the raw amino-acid sequence, 200 residues long: Small ribosomal subunit protein uS4 (200 aa).

The tract at residues 22 to 41 (TGKEIEKRPYAPGQHGPNQR) is disordered. An S4 RNA-binding domain is found at 92–152 (TRLDNLVYRL…EKSQNLAVVG (61 aa)).

It belongs to the universal ribosomal protein uS4 family. Part of the 30S ribosomal subunit. Contacts protein S5. The interaction surface between S4 and S5 is involved in control of translational fidelity.

Its function is as follows. One of the primary rRNA binding proteins, it binds directly to 16S rRNA where it nucleates assembly of the body of the 30S subunit. With S5 and S12 plays an important role in translational accuracy. This chain is Small ribosomal subunit protein uS4, found in Lysinibacillus sphaericus (strain C3-41).